Reading from the N-terminus, the 225-residue chain is DNA-binding response regulator MtrA (225 aa).

One can recognise a Response regulatory domain in the interval R4–L117. D53 carries the post-translational modification 4-aspartylphosphate. The ompR/PhoB-type DNA-binding region spans A125–P224.

Phosphorylated by MtrB.

Its function is as follows. Member of the two-component regulatory system MtrA/MtrB. The polypeptide is DNA-binding response regulator MtrA (mtrA) (Mycolicibacterium paratuberculosis (strain ATCC BAA-968 / K-10) (Mycobacterium paratuberculosis)).